Consider the following 450-residue polypeptide: Citrate/malate-proton symporter (450 aa).

At 1-32 (MGELQTHMQLQTDTIHEGVRKENWFAKAMNIK) the chain is on the cytoplasmic side. A helical transmembrane segment spans residues 33-53 (VGIIPLPVYALLFILITVFVM). The Extracellular portion of the chain corresponds to 54–64 (HHDVKSDILTS). The helical transmembrane segment at 65–85 (IAVMAFFGFTFAQIGKSIPIV) threads the bilayer. At 86–87 (RS) the chain is on the cytoplasmic side. Residues 88 to 108 (IGGPAILATFIPSAVVYYHLL) traverse the membrane as a helical segment. Residues 109–118 (PNDIVKSTTE) are Extracellular-facing. A helical transmembrane segment spans residues 119-139 (FTENSNFLYLFIAGIVVGSIL). Residues 140-152 (GMKRETLVKAFMK) lie on the Cytoplasmic side of the membrane. Residues 153 to 173 (IFIPLIVGSVTAAIVGLAVGT) form a helical membrane-spanning segment. Topologically, residues 174–217 (LLGLGFQHTLLYIVIPIMAGGVGEGAIPLSIGYSDIMPISQGEA) are extracellular. A helical membrane pass occupies residues 218–238 (FALVLPSIMLGSLCAIILAGL). Residues 239 to 273 (LNRIGKKKPEWTGNGKVDRSEEESPALEESQSGQQ) are Cytoplasmic-facing. The disordered stretch occupies residues 249-268 (WTGNGKVDRSEEESPALEES). The chain crosses the membrane as a helical span at residues 274–294 (MFNLSLFASGGILAVSLYLVG). Residue M295 is a topological domain, extracellular. The helical transmembrane segment at 296-316 (LAHDFFGFPAPVAMLLLAVLI) threads the bilayer. The Cytoplasmic portion of the chain corresponds to 317 to 335 (KLFRLVPASIENGAFGVSR). The chain crosses the membrane as a helical span at residues 336–356 (FFSTAVTYPLLFAIGVSMTPW). Residues 357–364 (DKLVAAFN) are Extracellular-facing. A helical membrane pass occupies residues 365 to 385 (LSNIITILSVVVTMMAVGFFT). Topologically, residues 386–428 (GKWLNMYPIETAIINACHSGQGGTGDVAILSAAERLELMPFAQ) are cytoplasmic. A helical transmembrane segment spans residues 429–446 (VSTRIGGAITVSLTLLLL). Topologically, residues 447 to 450 (HQFY) are extracellular.

It belongs to the 2-hydroxycarboxylate transporter (2-HCT) (TC 2.A.24) family.

It is found in the cell membrane. The catalysed reaction is citrate(in) + 3 H(+)(in) = citrate(out) + 3 H(+)(out). It carries out the reaction (S)-malate(in) + 2 H(+)(in) = (S)-malate(out) + 2 H(+)(out). The uptake activity is inhibited by divalent metal ions such as Ca(2+), Mg(2+) and Ni(2+). In terms of biological role, proton motive force-driven secondary transporter that catalyzes the uptake of both citrate and malate. Is an electroneutral proton-solute symporter: the number of protons transported is equal to the valence of the transported anions. Translocates the free citrate and malate anions. Citramalate binds to the transporter, but it is not translocated. Is strictly stereoselective, recognizing only the (S)-enantiomers of malate and citramalate. The protein is Citrate/malate-proton symporter of Bacillus subtilis (strain 168).